Here is a 576-residue protein sequence, read N- to C-terminus: uncharacterized protein (576 aa).

The Cytoplasmic portion of the chain corresponds to 1–8 (MSLSLGAA). The chain crosses the membrane as a helical span at residues 9 to 29 (IYIALKPIFKIYTIMLVGYLV). Topologically, residues 30-45 (AKFDIVSMENAKGISN) are extracellular. The chain crosses the membrane as a helical span at residues 46–66 (MVVNAILPCLTFNKIVSNISW). Topologically, residues 67 to 71 (RDIKE) are cytoplasmic. Residues 72–92 (IGVIILSAFILFVLGATGALF) form a helical membrane-spanning segment. Topologically, residues 93–103 (TTFATTVPKKF) are extracellular. A helical transmembrane segment spans residues 104–124 (FWGLIFAGFFPNISDLPIAYI). The Cytoplasmic segment spans residues 125–141 (QSMGNGSIFTAEEADKG). The helical transmembrane segment at 142-162 (VAYSCIFLFIQSFLMMNFGMW) threads the bilayer. Topologically, residues 163–400 (RVVGLDFRDT…FIINCLRPAS (238 aa)) are extracellular. A helical membrane pass occupies residues 401–421 (LGAILGIICALIPWVKACFVT). Topologically, residues 422–437 (TYVHVHKAPDGEPVLN) are cytoplasmic. A helical membrane pass occupies residues 438-458 (FLMDFTEYIGNACVPLGLLLL). Topologically, residues 459 to 476 (GGTLARLEIKSLPPGFIK) are extracellular. Residues 477–497 (SALLMTCFRLIVIPIIGVLWV) traverse the membrane as a helical segment. Residues 498–512 (NKLYSIDWLDTGIGK) are Cytoplasmic-facing. The chain crosses the membrane as a helical span at residues 513–533 (FDMILTWSMPSATAQVYFTAF). At 534–545 (YTPACGDHIQMN) the chain is on the extracellular side. The chain crosses the membrane as a helical span at residues 546–566 (CLSVLFVMQYAILFITVAFVV). Over 567–576 (TYTLKVDLKV) the chain is Cytoplasmic.

This sequence belongs to the auxin efflux carrier (TC 2.A.69) family.

The protein localises to the membrane. This is an uncharacterized protein from Saccharomyces cerevisiae (strain ATCC 204508 / S288c) (Baker's yeast).